A 194-amino-acid polypeptide reads, in one-letter code: Outer surface 22 kDa lipoprotein (194 aa).

The N-terminal stretch at 1 to 21 (MYKNGFFKNYLSLFLIFLVIA) is a signal peptide. Cys-22 carries N-palmitoyl cysteine lipidation. Cys-22 carries the S-diacylglycerol cysteine lipid modification.

The protein resides in the cell outer membrane. This chain is Outer surface 22 kDa lipoprotein (p22), found in Borreliella burgdorferi (strain ZS7) (Borrelia burgdorferi).